A 131-amino-acid chain; its full sequence is Mesogenin-1 (131 aa).

A disordered region spans residues 22–79; sequence EDRSFGDSASSPESESFDSACSSPDARSSPTAGCEHAEQQKPKVKMSMRRRMKASERE. Over residues 27-45 the composition is skewed to low complexity; sequence GDSASSPESESFDSACSSP. Residues 63-73 are compositionally biased toward basic residues; the sequence is PKVKMSMRRRM. In terms of domain architecture, bHLH spans 70–124; it reads RRRMKASEREKLRMRSLAEALHQLRDYLPPGYSRRGQPLTKIQTLKYTIQYIKEL.

As to expression, coexpression of ntl and spt is required for expression.

The protein localises to the nucleus. Its function is as follows. Involved in specifying the paraxial, but not dorsal, mesoderm. May regulate the expression of T-box transcription factors required for mesoderm formation and differentiation. This Danio rerio (Zebrafish) protein is Mesogenin-1 (msgn1).